Consider the following 512-residue polypeptide: NADH-quinone oxidoreductase subunit N (512 aa).

The next 14 membrane-spanning stretches (helical) occupy residues 32–52 (VLPA…SVLF), 57–77 (FIIV…AVFY), 97–117 (VLSF…AAIV), 126–146 (IEFP…TLMT), 151–171 (FILV…LIGM), 186–206 (FLLG…LFGG), 231–251 (IGLV…PYHA), 264–284 (VTGY…LILY), 296–316 (WAWL…LLAL), 324–344 (MLAY…SAGI), 348–368 (VLFY…ILAY), 392–412 (AIAI…GGFW), 431–451 (ILLI…LRIG), and 473–493 (VGVT…WFLL).

This sequence belongs to the complex I subunit 2 family. As to quaternary structure, NDH-1 is composed of 14 different subunits. Subunits NuoA, H, J, K, L, M, N constitute the membrane sector of the complex.

Its subcellular location is the cell inner membrane. The catalysed reaction is a quinone + NADH + 5 H(+)(in) = a quinol + NAD(+) + 4 H(+)(out). Functionally, NDH-1 shuttles electrons from NADH, via FMN and iron-sulfur (Fe-S) centers, to quinones in the respiratory chain. The immediate electron acceptor for the enzyme in this species is believed to be ubiquinone. Couples the redox reaction to proton translocation (for every two electrons transferred, four hydrogen ions are translocated across the cytoplasmic membrane), and thus conserves the redox energy in a proton gradient. The protein is NADH-quinone oxidoreductase subunit N of Leptospira interrogans serogroup Icterohaemorrhagiae serovar Lai (strain 56601).